A 117-amino-acid chain; its full sequence is Immunoglobulin heavy variable 1-3 (117 aa).

The N-terminal stretch at 1–19 (MDWTWRILFLVAAATGAHS) is a signal peptide. The interval 20 to 44 (QVQLVQSGAEVKKPGASVKVSCKAS) is framework-1. The Ig-like domain occupies 20–117 (QVQLVQSGAE…EDTAVYYCAR (98 aa)). The cysteines at positions 41 and 115 are disulfide-linked. The tract at residues 45 to 52 (GYTFTSYA) is complementarity-determining-1. Positions 53–69 (MHWVRQAPGQRLEWMGW) are framework-2. Residues 70 to 77 (INAGNGNT) form a complementarity-determining-2 region. A framework-3 region spans residues 78–115 (KYSQKFQGRVTITRDTSASTAYMELSSLRSEDTAVYYC). A complementarity-determining-3 region spans residues 116 to 117 (AR).

As to quaternary structure, immunoglobulins are composed of two identical heavy chains and two identical light chains; disulfide-linked.

Its subcellular location is the secreted. It localises to the cell membrane. In terms of biological role, v region of the variable domain of immunoglobulin heavy chains that participates in the antigen recognition. Immunoglobulins, also known as antibodies, are membrane-bound or secreted glycoproteins produced by B lymphocytes. In the recognition phase of humoral immunity, the membrane-bound immunoglobulins serve as receptors which, upon binding of a specific antigen, trigger the clonal expansion and differentiation of B lymphocytes into immunoglobulins-secreting plasma cells. Secreted immunoglobulins mediate the effector phase of humoral immunity, which results in the elimination of bound antigens. The antigen binding site is formed by the variable domain of one heavy chain, together with that of its associated light chain. Thus, each immunoglobulin has two antigen binding sites with remarkable affinity for a particular antigen. The variable domains are assembled by a process called V-(D)-J rearrangement and can then be subjected to somatic hypermutations which, after exposure to antigen and selection, allow affinity maturation for a particular antigen. The chain is Immunoglobulin heavy variable 1-3 from Homo sapiens (Human).